A 1075-amino-acid chain; its full sequence is DNA-directed RNA polymerase subunit beta (1075 aa).

Belongs to the RNA polymerase beta chain family. In plastids the minimal PEP RNA polymerase catalytic core is composed of four subunits: alpha, beta, beta', and beta''. When a (nuclear-encoded) sigma factor is associated with the core the holoenzyme is formed, which can initiate transcription.

It localises to the plastid. Its subcellular location is the chloroplast. The catalysed reaction is RNA(n) + a ribonucleoside 5'-triphosphate = RNA(n+1) + diphosphate. In terms of biological role, DNA-dependent RNA polymerase catalyzes the transcription of DNA into RNA using the four ribonucleoside triphosphates as substrates. The chain is DNA-directed RNA polymerase subunit beta from Sorghum bicolor (Sorghum).